Reading from the N-terminus, the 175-residue chain is Adenine phosphoribosyltransferase (175 aa).

The protein belongs to the purine/pyrimidine phosphoribosyltransferase family. As to quaternary structure, homodimer.

Its subcellular location is the cytoplasm. The catalysed reaction is AMP + diphosphate = 5-phospho-alpha-D-ribose 1-diphosphate + adenine. Its pathway is purine metabolism; AMP biosynthesis via salvage pathway; AMP from adenine: step 1/1. Its function is as follows. Catalyzes a salvage reaction resulting in the formation of AMP, that is energically less costly than de novo synthesis. This chain is Adenine phosphoribosyltransferase, found in Caldicellulosiruptor saccharolyticus (strain ATCC 43494 / DSM 8903 / Tp8T 6331).